We begin with the raw amino-acid sequence, 318 residues long: Thymidylate synthase (318 aa).

Residues Arg-25 and 180-181 contribute to the dUMP site; that span reads RR. Catalysis depends on Cys-200, which acts as the Nucleophile. Residues 220 to 223, Asn-231, and 261 to 263 each bind dUMP; these read RSAD and HIY. Residue Asp-223 coordinates (6R)-5,10-methylene-5,6,7,8-tetrahydrofolate. Position 317 (Ala-317) interacts with (6R)-5,10-methylene-5,6,7,8-tetrahydrofolate.

The protein belongs to the thymidylate synthase family. Bacterial-type ThyA subfamily. In terms of assembly, homodimer.

It is found in the cytoplasm. It carries out the reaction dUMP + (6R)-5,10-methylene-5,6,7,8-tetrahydrofolate = 7,8-dihydrofolate + dTMP. Its pathway is pyrimidine metabolism; dTTP biosynthesis. Functionally, catalyzes the reductive methylation of 2'-deoxyuridine-5'-monophosphate (dUMP) to 2'-deoxythymidine-5'-monophosphate (dTMP) while utilizing 5,10-methylenetetrahydrofolate (mTHF) as the methyl donor and reductant in the reaction, yielding dihydrofolate (DHF) as a by-product. This enzymatic reaction provides an intracellular de novo source of dTMP, an essential precursor for DNA biosynthesis. This is Thymidylate synthase from Ligilactobacillus salivarius (strain UCC118) (Lactobacillus salivarius).